Here is a 363-residue protein sequence, read N- to C-terminus: Ribosome-binding ATPase YchF (363 aa).

The OBG-type G domain maps to 3-257 (FKCGFVGLPN…VSAYDHLSLK (255 aa)). 12–17 (NVGKST) is an ATP binding site. Ser-16 and Thr-36 together coordinate Mg(2+). In terms of domain architecture, TGS spans 278-361 (NLITFFTAGK…CDGDIIHVLY (84 aa)).

This sequence belongs to the TRAFAC class OBG-HflX-like GTPase superfamily. OBG GTPase family. YchF/OLA1 subfamily. Mg(2+) is required as a cofactor.

ATPase that binds to both the 70S ribosome and the 50S ribosomal subunit in a nucleotide-independent manner. This chain is Ribosome-binding ATPase YchF, found in Buchnera aphidicola subsp. Baizongia pistaciae (strain Bp).